Consider the following 214-residue polypeptide: Pyridoxine/pyridoxamine 5'-phosphate oxidase (214 aa).

Residues 8–11 (RINY) and K66 each bind substrate. Residues 61–66 (RIVLIK), 76–77 (FT), R82, K83, and Q105 each bind FMN. Substrate is bound by residues Y123, R127, and S131. Residues 140-141 (QS) and W184 each bind FMN. Position 190 to 192 (190 to 192 (RLH)) interacts with substrate. R194 contributes to the FMN binding site.

Belongs to the pyridoxamine 5'-phosphate oxidase family. In terms of assembly, homodimer. Requires FMN as cofactor.

It catalyses the reaction pyridoxamine 5'-phosphate + O2 + H2O = pyridoxal 5'-phosphate + H2O2 + NH4(+). It carries out the reaction pyridoxine 5'-phosphate + O2 = pyridoxal 5'-phosphate + H2O2. It functions in the pathway cofactor metabolism; pyridoxal 5'-phosphate salvage; pyridoxal 5'-phosphate from pyridoxamine 5'-phosphate: step 1/1. The protein operates within cofactor metabolism; pyridoxal 5'-phosphate salvage; pyridoxal 5'-phosphate from pyridoxine 5'-phosphate: step 1/1. Functionally, catalyzes the oxidation of either pyridoxine 5'-phosphate (PNP) or pyridoxamine 5'-phosphate (PMP) into pyridoxal 5'-phosphate (PLP). This is Pyridoxine/pyridoxamine 5'-phosphate oxidase from Burkholderia orbicola (strain MC0-3).